Consider the following 206-residue polypeptide: Large ribosomal subunit protein eL8 (206 aa).

Belongs to the eukaryotic ribosomal protein eL8 family. As to quaternary structure, component of the large ribosomal subunit.

The protein localises to the cytoplasm. The sequence is that of Large ribosomal subunit protein eL8 (RPL7A) from Encephalitozoon cuniculi (strain GB-M1) (Microsporidian parasite).